The chain runs to 637 residues: MGSNDRASRSPRSDDQREISDMPATKRTRSDSGKSTDSKIPYLSQPLYDLKQTGDVKFGPGTRSALLGLLGGALPKLSSEQHDLVSKAKKYAMEQSIKMVLMKQTLAHQQQQLATQRTQVQRQQALALMCRVYVGSISFELKEDTIRVAFTPFGPIKSINMSWDPITQKHKGFAFVEYEIPEGAQLALEQMNGALMGGRNIKVGRPSNMPQAQQVIDEVQEEAKSFNRIYVASIHPDLSEEDIKSVFEAFGPILYCKLAQGTSLHTHKGYGFIEYANKQAMDEAIASMNLFDLGGQLLRVGRSITPPNALACPTTNSTMPTAAAVAAAAATAKIQALDAVASNAVLGLSQNTPVMAAGAVVTKVGAMPVVSAATSAAALHPALAQAAPALLPPGIFQAPTPVAPSLLGVPAGLQPLQAVVPTLPPPALLATPTLPMTVGGVGVGLVPTVATLAGAEASKGAAAAAALSAAANNAAVTAANLSENIKKAHEKQQEELQKKLMDEGDVQTLQQQENMSIKGQSARQLVMQRLMRPVDSRVIILRNMVGPEDVDETLQEEIQEECSKFGTVSRVIIFNEKQTENEDDDEAEIIVKIFVEFSAGAEAMRGKEALDGRFFGGRRVVAELYDQGIFDQGDLSG.

Basic and acidic residues-rich tracts occupy residues 1–20 and 28–37; these read MGSN…REIS and TRSDSGKSTD. The disordered stretch occupies residues 1 to 41; the sequence is MGSNDRASRSPRSDDQREISDMPATKRTRSDSGKSTDSKIP. Ser13 and Ser30 each carry phosphoserine. 2 RRM domains span residues 130–208 and 227–305; these read CRVY…RPSN and NRIY…RSIT. The RRM 3; atypical domain occupies 537-627; the sequence is RVIILRNMVG…RRVVAELYDQ (91 aa).

Belongs to the RRM half pint family. In terms of assembly, interacts with enc. However, given the cytoplasmic localization of enc, the relevance of such interaction is unclear. In terms of tissue distribution, expressed in all germline cells and within the follicle cell.

It localises to the nucleus. Its function is as follows. Splicing factor that regulates oogenesis and controls both mitosis and mRNA localization in the germline by regulating mRNA splicing of a subset of genes within the ovary. Probably acts by regulating the alternative splice site selection of the otu transcript. Also regulates the alternative splicing of eIF4E1 and grk, while it is not involved in the splicing of par-1, sqd or psq. Involved in the alternative splicing of the bicistronic pre-mRNA encoding Kdm3 and CG8176; required for the efficient production of mRNA encoding Kdm3 and Kdm3-mediated regulation of rhino-dependent piRNA production. In Drosophila melanogaster (Fruit fly), this protein is Poly(U)-binding-splicing factor hfp.